The sequence spans 124 residues: Ragulator complex protein LAMTOR3 (124 aa).

Residues 57–70 (TDQGSKLGLSKNKS) form a required for interaction with LAMTOR2 region.

It belongs to the LAMTOR3 family. In terms of assembly, part of the Ragulator complex composed of LAMTOR1, LAMTOR2, LAMTOR3, LAMTOR4 and LAMTOR5. LAMTOR4 and LAMTOR5 form a heterodimer that interacts, through LAMTOR1, with a LAMTOR2, LAMTOR3 heterodimer. Interacts with LAMTOR1 and LAMTOR2; the interaction is direct. The Ragulator complex interacts with both the mTORC1 complex and heterodimers constituted of the Rag GTPases RagA/RRAGA, RagB/RRAGB, RagC/RRAGC and RagD/RRAGD; regulated by amino acid availability. The Ragulator complex interacts with SLC38A9; the probable amino acid sensor. Component of the lysosomal folliculin complex (LFC), composed of FLCN, FNIP1 (or FNIP2), RagA/RRAGA or RagB/RRAGB GDP-bound, RagC/RRAGC or RagD/RRAGD GTP-bound, and Ragulator. Interacts with MAP2K1/MEK1 and MAPK2. Interacts with MORG1.

Its subcellular location is the late endosome membrane. As part of the Ragulator complex it is involved in amino acid sensing and activation of mTORC1, a signaling complex promoting cell growth in response to growth factors, energy levels, and amino acids. Activated by amino acids through a mechanism involving the lysosomal V-ATPase, the Ragulator plays a dual role for the small GTPases Rag (RagA/RRAGA, RagB/RRAGB, RagC/RRAGC and/or RagD/RRAGD): it (1) acts as a guanine nucleotide exchange factor (GEF), activating the small GTPases Rag and (2) mediates recruitment of Rag GTPases to the lysosome membrane. Activated Ragulator and Rag GTPases function as a scaffold recruiting mTORC1 to lysosomes where it is in turn activated. Adapter protein that enhances the efficiency of the MAP kinase cascade facilitating the activation of MAPK2. This is Ragulator complex protein LAMTOR3 from Homo sapiens (Human).